The sequence spans 446 residues: Na(+)-translocating NADH-quinone reductase subunit A (446 aa).

This sequence belongs to the NqrA family. As to quaternary structure, composed of six subunits; NqrA, NqrB, NqrC, NqrD, NqrE and NqrF.

It catalyses the reaction a ubiquinone + n Na(+)(in) + NADH + H(+) = a ubiquinol + n Na(+)(out) + NAD(+). In terms of biological role, NQR complex catalyzes the reduction of ubiquinone-1 to ubiquinol by two successive reactions, coupled with the transport of Na(+) ions from the cytoplasm to the periplasm. NqrA to NqrE are probably involved in the second step, the conversion of ubisemiquinone to ubiquinol. The polypeptide is Na(+)-translocating NADH-quinone reductase subunit A (Histophilus somni (strain 129Pt) (Haemophilus somnus)).